The following is a 343-amino-acid chain: Protein RecA (343 aa).

Position 65 to 72 (65 to 72 (GPESSGKT)) interacts with ATP.

This sequence belongs to the RecA family.

It localises to the cytoplasm. Can catalyze the hydrolysis of ATP in the presence of single-stranded DNA, the ATP-dependent uptake of single-stranded DNA by duplex DNA, and the ATP-dependent hybridization of homologous single-stranded DNAs. It interacts with LexA causing its activation and leading to its autocatalytic cleavage. The polypeptide is Protein RecA (Campylobacter jejuni subsp. jejuni serotype O:6 (strain 81116 / NCTC 11828)).